A 160-amino-acid polypeptide reads, in one-letter code: Phosphopantetheine adenylyltransferase (160 aa).

Thr-11 serves as a coordination point for substrate. Residues Thr-11–Phe-12 and His-19 contribute to the ATP site. The substrate site is built by Lys-43, Leu-75, and Arg-89. Residues Gly-90–Arg-92, Glu-100, and His-125–Ser-131 contribute to the ATP site.

This sequence belongs to the bacterial CoaD family. In terms of assembly, homohexamer. The cofactor is Mg(2+).

The protein localises to the cytoplasm. The catalysed reaction is (R)-4'-phosphopantetheine + ATP + H(+) = 3'-dephospho-CoA + diphosphate. It participates in cofactor biosynthesis; coenzyme A biosynthesis; CoA from (R)-pantothenate: step 4/5. Its function is as follows. Reversibly transfers an adenylyl group from ATP to 4'-phosphopantetheine, yielding dephospho-CoA (dPCoA) and pyrophosphate. The chain is Phosphopantetheine adenylyltransferase from Methylobacillus flagellatus (strain ATCC 51484 / DSM 6875 / VKM B-1610 / KT).